The following is a 424-amino-acid chain: MKKVIITPSKLRGSVKIPPSKSMAHRAIICASLSKGESVISNIDFSEDIIATMEGMKSLGANIKVEKDKLIINGENILKDSNYKVIDCNESGSTLRFLVPISLIKDNKVNFIGRGNLGKRPLKTYYEIFEEQEIKYSYEEENLDLNIEGSLKGGEFKVKGNISSQFISGLLFTLPLLKDDSKIIITTELESKGYIDLTLDMIEKFGVTIKNNNYREFLIKGNQSYKPMNYKVEGDYSQAAFYFSAGALGSEINCLDLDLSSYQGDKECIEILEGMGARLIKNQEESLSIIHGDLNGTIIDASQCPDIIPVLTVVAALSKGETSIINGERLRIKECDRLNAICTELNKLGADIKELKDGLIINGVKELIGGEVYSHKDHRIAMSLAIASTRCKEEVIIREPDCVKKSYPGFWEDFKSLSGILREE.

3 residues coordinate 3-phosphoshikimate: Lys21, Ser22, and Arg26. Lys21 contacts phosphoenolpyruvate. Residues Gly92 and Arg120 each coordinate phosphoenolpyruvate. Residues Ser163, Ser164, Gln165, Ser191, Asp306, and Lys333 each coordinate 3-phosphoshikimate. Gln165 lines the phosphoenolpyruvate pocket. Asp306 serves as the catalytic Proton acceptor. Phosphoenolpyruvate-binding residues include Arg337, Arg379, and Lys405.

It belongs to the EPSP synthase family. As to quaternary structure, monomer.

The protein localises to the cytoplasm. It catalyses the reaction 3-phosphoshikimate + phosphoenolpyruvate = 5-O-(1-carboxyvinyl)-3-phosphoshikimate + phosphate. It participates in metabolic intermediate biosynthesis; chorismate biosynthesis; chorismate from D-erythrose 4-phosphate and phosphoenolpyruvate: step 6/7. Catalyzes the transfer of the enolpyruvyl moiety of phosphoenolpyruvate (PEP) to the 5-hydroxyl of shikimate-3-phosphate (S3P) to produce enolpyruvyl shikimate-3-phosphate and inorganic phosphate. The sequence is that of 3-phosphoshikimate 1-carboxyvinyltransferase from Clostridium perfringens (strain SM101 / Type A).